Reading from the N-terminus, the 392-residue chain is 1-deoxy-D-xylulose 5-phosphate reductoisomerase (392 aa).

NADPH is bound by residues Thr14, Gly15, Ser16, Ile17, Gly40, Gln43, and Asn126. Residue Lys127 coordinates 1-deoxy-D-xylulose 5-phosphate. Glu128 contributes to the NADPH binding site. Asp150 is a binding site for Mn(2+). Residues Ser151, Glu152, Ser176, and His199 each contribute to the 1-deoxy-D-xylulose 5-phosphate site. Mn(2+) is bound at residue Glu152. NADPH is bound at residue Gly205. Positions 212, 217, 218, and 221 each coordinate 1-deoxy-D-xylulose 5-phosphate. Glu221 provides a ligand contact to Mn(2+).

The protein belongs to the DXR family. Requires Mg(2+) as cofactor. Mn(2+) is required as a cofactor.

The catalysed reaction is 2-C-methyl-D-erythritol 4-phosphate + NADP(+) = 1-deoxy-D-xylulose 5-phosphate + NADPH + H(+). Its pathway is isoprenoid biosynthesis; isopentenyl diphosphate biosynthesis via DXP pathway; isopentenyl diphosphate from 1-deoxy-D-xylulose 5-phosphate: step 1/6. Its function is as follows. Catalyzes the NADPH-dependent rearrangement and reduction of 1-deoxy-D-xylulose-5-phosphate (DXP) to 2-C-methyl-D-erythritol 4-phosphate (MEP). In Corynebacterium glutamicum (strain ATCC 13032 / DSM 20300 / JCM 1318 / BCRC 11384 / CCUG 27702 / LMG 3730 / NBRC 12168 / NCIMB 10025 / NRRL B-2784 / 534), this protein is 1-deoxy-D-xylulose 5-phosphate reductoisomerase.